We begin with the raw amino-acid sequence, 259 residues long: tRNA-cytidine(32) 2-sulfurtransferase (259 aa).

The PP-loop motif signature appears at 40 to 45 (SGGKDS). Residues Cys-114, Cys-117, and Cys-205 each coordinate [4Fe-4S] cluster.

Belongs to the TtcA family. As to quaternary structure, homodimer. The cofactor is Mg(2+). [4Fe-4S] cluster is required as a cofactor.

It localises to the cytoplasm. The enzyme catalyses cytidine(32) in tRNA + S-sulfanyl-L-cysteinyl-[cysteine desulfurase] + AH2 + ATP = 2-thiocytidine(32) in tRNA + L-cysteinyl-[cysteine desulfurase] + A + AMP + diphosphate + H(+). Its pathway is tRNA modification. Catalyzes the ATP-dependent 2-thiolation of cytidine in position 32 of tRNA, to form 2-thiocytidine (s(2)C32). The sulfur atoms are provided by the cysteine/cysteine desulfurase (IscS) system. This is tRNA-cytidine(32) 2-sulfurtransferase from Bdellovibrio bacteriovorus (strain ATCC 15356 / DSM 50701 / NCIMB 9529 / HD100).